The chain runs to 253 residues: HTH-type transcriptional regulator YdeO (253 aa).

The HTH araC/xylS-type domain maps to 137-233; the sequence is GKVRNIVNMK…GNSPKRVSKE (97 aa). 2 consecutive DNA-binding regions (H-T-H motif) follow at residues 154–175 and 200–223; these read KDICDCLYISESLLKKKLKQEQ and VNKIAEQCGYASTSYFIYAFRKHF.

Its function is as follows. Induces the expression of gadE. Could also regulate the expression of other genes involved in acid resistance. The sequence is that of HTH-type transcriptional regulator YdeO (ydeO) from Shigella flexneri.